An 897-amino-acid chain; its full sequence is Major intrinsically disordered Notch2-binding receptor 1 (897 aa).

The Cytoplasmic portion of the chain corresponds to 1 to 872; the sequence is MDAMPEYSLF…AEFRRAKACK (872 aa). 3 disordered regions span residues 405–433, 450–502, and 688–766; these read AKDK…SVAC, SINC…EDSE, and TRRS…PPKD. Composition is skewed to polar residues over residues 411-423 and 452-471; these read ASPS…SNGS and NCPS…GTQT. Over residues 472-498 the composition is skewed to basic and acidic residues; it reads EQHESRKVKDYPSQNKFKERPPFKHSE. The segment covering 697–724 has biased composition (polar residues); it reads EENSATESKVASITNSPRDWRTVSYSSH. A compositionally biased stretch (basic and acidic residues) spans 725 to 756; that stretch reads NGEEGKERDRHSEGKERHRKSREAERQYEAHQ. The chain crosses the membrane as a helical span at residues 873–893; it reads IGALIFAAACTVILVIVVPIC. Topologically, residues 894 to 897 are extracellular; the sequence is TMKS.

Belongs to the MINAR family.

The protein localises to the cell membrane. In terms of biological role, intrinsically disordered protein which may negatively regulate mTOR signaling pathway by stabilizing the mTOR complex component DEPTOR. Negatively regulates angiogenesis. Negatively regulates cell growth. May play a role in neuronal development. This Danio rerio (Zebrafish) protein is Major intrinsically disordered Notch2-binding receptor 1 (minar1).